Consider the following 196-residue polypeptide: MIDRLRGQLVEKDPEGVVVDCGGVGYRAAAPLSTLRALPAVGEECVVHTRMVVREDAMLLFGFATREEREAFDALTSVSKVGPRLALAVLSAMTPGQMMEAAARGDVHRFAAVPGLGRKTAERLVLELRGRELAAAGGGGGVAAGEGDGPFMEAREALTGLGYSLEEAERALRDVPPQETVEQYIKAALRKIGGRR.

The segment at 1–64 (MIDRLRGQLV…EDAMLLFGFA (64 aa)) is domain I. Residues 65-143 (TREEREAFDA…AAAGGGGGVA (79 aa)) form a domain II region. The segment at 144 to 153 (AGEGDGPFME) is flexible linker. The segment at 153 to 196 (EAREALTGLGYSLEEAERALRDVPPQETVEQYIKAALRKIGGRR) is domain III.

The protein belongs to the RuvA family. As to quaternary structure, homotetramer. Forms an RuvA(8)-RuvB(12)-Holliday junction (HJ) complex. HJ DNA is sandwiched between 2 RuvA tetramers; dsDNA enters through RuvA and exits via RuvB. An RuvB hexamer assembles on each DNA strand where it exits the tetramer. Each RuvB hexamer is contacted by two RuvA subunits (via domain III) on 2 adjacent RuvB subunits; this complex drives branch migration. In the full resolvosome a probable DNA-RuvA(4)-RuvB(12)-RuvC(2) complex forms which resolves the HJ.

It localises to the cytoplasm. Its function is as follows. The RuvA-RuvB-RuvC complex processes Holliday junction (HJ) DNA during genetic recombination and DNA repair, while the RuvA-RuvB complex plays an important role in the rescue of blocked DNA replication forks via replication fork reversal (RFR). RuvA specifically binds to HJ cruciform DNA, conferring on it an open structure. The RuvB hexamer acts as an ATP-dependent pump, pulling dsDNA into and through the RuvAB complex. HJ branch migration allows RuvC to scan DNA until it finds its consensus sequence, where it cleaves and resolves the cruciform DNA. The protein is Holliday junction branch migration complex subunit RuvA of Rubrobacter xylanophilus (strain DSM 9941 / JCM 11954 / NBRC 16129 / PRD-1).